Here is a 219-residue protein sequence, read N- to C-terminus: Biofilm-associated metzincin protease inhibitor (219 aa).

The chain crosses the membrane as a helical span at residues 4–24; it reads TWIYAASAAAIGGALIGGWLL. Positions 191–204 are enriched in basic and acidic residues; sequence DIAARSDPHGDHVD. The segment at 191-219 is disordered; the sequence is DIAARSDPHGDHVDAPLAELPPMPPPAQG. The segment covering 209–219 has biased composition (pro residues); the sequence is ELPPMPPPAQG.

Its subcellular location is the cell membrane. Its function is as follows. Inhibitor of the metalloendopeptidase Mep72. Forms a protein-protein complex with the protease, which is the product of its coregulated adjacent gene, and probably prevents premature protease activity until the protein has been secreted. The chain is Biofilm-associated metzincin protease inhibitor from Pseudomonas aeruginosa (strain ATCC 15692 / DSM 22644 / CIP 104116 / JCM 14847 / LMG 12228 / 1C / PRS 101 / PAO1).